The following is a 404-amino-acid chain: MELVLVGKFLYNGRIIDGSIGVKDGKITKFSLRELKGDNKIKVEKGKIILPGLIDVHVHLRDFNETHKETIETGTKAAVHGGITTVFDMPNTKPPVMDEKTLKMREFLFKKKSYADYALGFLLAGNEPVKADFYKIFMGASTGGIYSKNFEEDYAKALDITSVHAEDYELISKYPERPPIVEISAIKKALNAARKVKKPLHICHVSTREGLKEILEANIPWVSFEVTPHHLFLTRKDYEKSKLLKVYPPLRDESDRRYLWEKLDNVPIIASDHAPHTLEDKERGAAGLPGLETEVALLLDAVNRGMLELWDVVEKMSLNPARIFRIKNKGWGEGKDADFAIVDMKKEWTIKAEEFYTKAGWTPYEGWKVRGKVIMTILRGEIVMEDDEVIGKPRGERIVKEGDD.

The Zn(2+) site is built by His-57 and His-59. Residues 59-61 (HLR) and Asn-91 contribute to the substrate site. Residues Lys-135, His-164, His-204, and Asp-272 each contribute to the Zn(2+) site. An N6-carboxylysine modification is found at Lys-135. The active site involves Asp-272. Substrate contacts are provided by residues His-276 and 286-287 (AG).

The protein belongs to the metallo-dependent hydrolases superfamily. DHOase family. Class I DHOase subfamily. The cofactor is Zn(2+).

The catalysed reaction is (S)-dihydroorotate + H2O = N-carbamoyl-L-aspartate + H(+). The protein operates within pyrimidine metabolism; UMP biosynthesis via de novo pathway; (S)-dihydroorotate from bicarbonate: step 3/3. Catalyzes the reversible cyclization of carbamoyl aspartate to dihydroorotate. This chain is Dihydroorotase, found in Pyrococcus abyssi (strain GE5 / Orsay).